Here is a 364-residue protein sequence, read N- to C-terminus: tRNA/tmRNA (uracil-C(5))-methyltransferase (364 aa).

Positions 188, 216, 221, 237, and 297 each coordinate S-adenosyl-L-methionine. The active-site Nucleophile is the cysteine 322. Residue glutamate 356 is the Proton acceptor of the active site.

The protein belongs to the class I-like SAM-binding methyltransferase superfamily. RNA M5U methyltransferase family. TrmA subfamily.

The catalysed reaction is uridine(54) in tRNA + S-adenosyl-L-methionine = 5-methyluridine(54) in tRNA + S-adenosyl-L-homocysteine + H(+). It catalyses the reaction uridine(341) in tmRNA + S-adenosyl-L-methionine = 5-methyluridine(341) in tmRNA + S-adenosyl-L-homocysteine + H(+). Functionally, dual-specificity methyltransferase that catalyzes the formation of 5-methyluridine at position 54 (m5U54) in all tRNAs, and that of position 341 (m5U341) in tmRNA (transfer-mRNA). The polypeptide is tRNA/tmRNA (uracil-C(5))-methyltransferase (Mannheimia succiniciproducens (strain KCTC 0769BP / MBEL55E)).